A 330-amino-acid chain; its full sequence is Short chain dehydrogenase macD (330 aa).

5 residues coordinate NADP(+): Lys-57, Asp-86, Asn-113, Tyr-204, and Lys-208. Tyr-204 serves as the catalytic Proton donor. The active-site Lowers pKa of active site Tyr is the Lys-208.

This sequence belongs to the short-chain dehydrogenases/reductases (SDR) family.

Its pathway is secondary metabolite biosynthesis; terpenoid biosynthesis. Functionally, short chain dehydrogenase; part of the gene cluster that mediates the biosynthesis of macrophorins, isoprenoid epoxycyclohexenones containing cyclized drimane moieties. The first step of the pathway is the synthesis of 6-methylsalicylic acid (6-MSA) by the polyketide synthase macA. 6-MSA is then converted to m-cresol by the decarboxylase macB. The cytochrome P450 monooxygenase macC then catalyzes the oxidation of m-cresol to toluquinol. Epoxidation of toluquinol is then performed by the short chain dehydrogenase macD, with the help of macE, and a further prenylation by macG leads to 7-deacetoxyyanuthone A. The next step is the hydroxylation of C-22 of 7-deacetoxyyanuthone A by the cytochrome P450 monooxygenase macH to yield 22-deacetylyanuthone A. O-Mevalon transferase macI then attaches mevalon to the hydroxyl group of 22-deacetylyanuthone A to produce yanuthone E. The terpene cyclase macJ catalyzes the cyclization of 22-deacetylyanuthone A to macrophorin A. MacJ is also able to catalyze cyclization of yanuthone E and 7-deacetoxyyanuthone A to their corresponding macrophorins. The macJ products can be further modified by macH and macJ, as well as by the FAD-dependent monooxygenase macF, to produce additional macrophorins, including 4'-oxomacrophorin A, 4'-oxomacrophorin D and 4'-oxomacrophorin E. This chain is Short chain dehydrogenase macD, found in Penicillium terrestre.